The following is a 417-amino-acid chain: Hyaluronidase-3 (417 aa).

Positions 1–20 (MTTQLGPALVLGVALCLGCG) are cleaved as a signal peptide. Intrachain disulfides connect C42–C331, C205–C220, C356–C367, C361–C395, and C397–C406. Residue N69 is glycosylated (N-linked (GlcNAc...) asparagine). E129 (proton donor) is an active-site residue. N-linked (GlcNAc...) asparagine glycosylation is present at N215. In terms of domain architecture, EGF-like spans 352–407 (AAMACSHQRCHGHGRCARRDPGQMEAFLHLWPDGSLGDWKSFSCHCYWGWAGPTCQ).

It belongs to the glycosyl hydrolase 56 family. Post-translationally, N-glycosylated. As to expression, expressed in sperm. Highly expressed in epidermis of the skin, where it is expressed intracellularily in the deep horny layer (at protein level). Bone marrow, testis and kidney.

It is found in the secreted. Its subcellular location is the cell membrane. It localises to the cytoplasmic vesicle. The protein resides in the secretory vesicle. The protein localises to the acrosome. It is found in the endoplasmic reticulum. Its subcellular location is the early endosome. It carries out the reaction Random hydrolysis of (1-&gt;4)-linkages between N-acetyl-beta-D-glucosamine and D-glucuronate residues in hyaluronate.. Functionally, facilitates sperm penetration into the layer of cumulus cells surrounding the egg by digesting hyaluronic acid. Involved in induction of the acrosome reaction in the sperm. Involved in follicular atresia, the breakdown of immature ovarian follicles that are not selected to ovulate. Induces ovarian granulosa cell apoptosis, possibly via apoptotic signaling pathway involving CASP8 and CASP3 activation, and poly(ADP-ribose) polymerase (PARP) cleavage. Has no hyaluronidase activity in embryonic fibroblasts in vitro. Has no hyaluronidase activity in granulosa cells in vitro. The polypeptide is Hyaluronidase-3 (HYAL3) (Homo sapiens (Human)).